A 260-amino-acid chain; its full sequence is Putative hydro-lyase Dshi_0610 (260 aa).

It belongs to the D-glutamate cyclase family.

The protein is Putative hydro-lyase Dshi_0610 of Dinoroseobacter shibae (strain DSM 16493 / NCIMB 14021 / DFL 12).